A 294-amino-acid polypeptide reads, in one-letter code: Nucleotide-binding protein CLD_1131 (294 aa).

ATP is bound at residue G8–T15. A GTP-binding site is contributed by D59–G62.

Belongs to the RapZ-like family.

Its function is as follows. Displays ATPase and GTPase activities. This chain is Nucleotide-binding protein CLD_1131, found in Clostridium botulinum (strain Okra / Type B1).